The sequence spans 649 residues: Phospholipase A1 PLIP1, chloroplastic (649 aa).

The transit peptide at 1-67 (MAFNTAMAST…NNRILAVSVR (67 aa)) directs the protein to the chloroplast. Residues 420–424 (GHSLG) carry the GXSXG motif. Ser-422 functions as the Acyl-ester intermediate in the catalytic mechanism. Residues Asp-483 and His-593 each act as charge relay system in the active site.

This sequence belongs to the AB hydrolase superfamily. Lipase family.

It is found in the plastid. It localises to the chloroplast thylakoid membrane. The enzyme catalyses a 1,2-diacyl-sn-glycero-3-phosphocholine + H2O = a 2-acyl-sn-glycero-3-phosphocholine + a fatty acid + H(+). It catalyses the reaction a 1,2-diacyl-3-O-(beta-D-galactosyl)-sn-glycerol + 2 H2O = 3-beta-D-galactosyl-sn-glycerol + 2 a fatty acid + 2 H(+). Its function is as follows. Sn-1-specific phospholipase A1 involved in seed oil biosynthesis. Hydrolyzes polyunsaturated acyl groups from a unique chloroplast-specific phosphatidylglycerol (PG) that contains 16:1 delta 3-trans as its second acyl group. The polyunsaturated acyl groups released by PLIP1 are exported from the chloroplast, reincorporated into phosphatidylcholine (PC), and ultimately enter seed triacylglycerol (TAG). In vitro, possesses broad substrate specificity. Can hydrolyze the galactolipid monogalactosyldiacylglycerol (MGDG), and the phoshpolipids phosphatidylcholine (PC), phosphatidylethanolamine (PE), phosphatidic acid (PA), phosphatidylserine (PS) phosphatidylglycerol (PG) and phosphatidylinositol (PI). The polypeptide is Phospholipase A1 PLIP1, chloroplastic (Arabidopsis thaliana (Mouse-ear cress)).